The sequence spans 347 residues: D-fructose 1,6-bisphosphatase class 2/sedoheptulose 1,7-bisphosphatase (347 aa).

Positions 33, 57, 97, and 100 each coordinate Mn(2+). Residues 100-102, Tyr-131, 176-178, and 198-200 contribute to the substrate site; these read EGT, RKR, and DGD. Glu-225 contacts Mn(2+).

The protein belongs to the FBPase class 2 family. As to quaternary structure, homotetramer. The cofactor is Mn(2+).

The catalysed reaction is beta-D-fructose 1,6-bisphosphate + H2O = beta-D-fructose 6-phosphate + phosphate. It catalyses the reaction D-sedoheptulose 1,7-bisphosphate + H2O = D-sedoheptulose 7-phosphate + phosphate. The protein operates within carbohydrate biosynthesis; Calvin cycle. Its function is as follows. Catalyzes the hydrolysis of fructose 1,6-bisphosphate (Fru 1,6-P2) and sedoheptulose 1,7-bisphosphate (Sed 1,7-P2) to fructose 6-phosphate and sedoheptulose 7-phosphate, respectively. In Synechococcus sp. (strain JA-3-3Ab) (Cyanobacteria bacterium Yellowstone A-Prime), this protein is D-fructose 1,6-bisphosphatase class 2/sedoheptulose 1,7-bisphosphatase.